A 219-amino-acid polypeptide reads, in one-letter code: Ribose-5-phosphate isomerase A (219 aa).

Residues 28–31, 81–84, and 94–97 each bind substrate; these read SGST, DGAD, and KGGG. The active-site Proton acceptor is the glutamate 103. Lysine 121 provides a ligand contact to substrate.

It belongs to the ribose 5-phosphate isomerase family. In terms of assembly, homodimer.

The enzyme catalyses aldehydo-D-ribose 5-phosphate = D-ribulose 5-phosphate. It participates in carbohydrate degradation; pentose phosphate pathway; D-ribose 5-phosphate from D-ribulose 5-phosphate (non-oxidative stage): step 1/1. Its function is as follows. Catalyzes the reversible conversion of ribose-5-phosphate to ribulose 5-phosphate. The chain is Ribose-5-phosphate isomerase A from Haemophilus influenzae (strain ATCC 51907 / DSM 11121 / KW20 / Rd).